The chain runs to 89 residues: Small ribosomal subunit protein uS15 (89 aa).

The protein belongs to the universal ribosomal protein uS15 family. As to quaternary structure, part of the 30S ribosomal subunit. Forms a bridge to the 50S subunit in the 70S ribosome, contacting the 23S rRNA.

Its function is as follows. One of the primary rRNA binding proteins, it binds directly to 16S rRNA where it helps nucleate assembly of the platform of the 30S subunit by binding and bridging several RNA helices of the 16S rRNA. Functionally, forms an intersubunit bridge (bridge B4) with the 23S rRNA of the 50S subunit in the ribosome. In Streptococcus gordonii (strain Challis / ATCC 35105 / BCRC 15272 / CH1 / DL1 / V288), this protein is Small ribosomal subunit protein uS15.